Here is an 817-residue protein sequence, read N- to C-terminus: Trehalose-phosphatase (817 aa).

A glycosyltransferase region spans residues Met-1–Ile-547.

In the N-terminal section; belongs to the glycosyltransferase 20 family. The protein in the C-terminal section; belongs to the trehalose phosphatase family. In terms of assembly, component of the trehalose synthase complex that contains at least tps1, ntp1, and tpp1. Interacts with tps1. Interacts with ntp1. The cofactor is Mg(2+).

It catalyses the reaction alpha,alpha-trehalose 6-phosphate + H2O = alpha,alpha-trehalose + phosphate. Its pathway is carbohydrate biosynthesis. Phosphatase catalytic subunit of the trehalose synthase complex that catalyzes the production of trehalose from glucose-6-phosphate and UDP-alpha-D-glucose in a two step process. The disaccharide trehalose serves as a storage carbohydrate that is mobilized during nutrient stress and spore germination. Together with ntp1, regulates the level of trehalose as a protectant for cell integrity during thermal, osmotic, and oxidative stress. This chain is Trehalose-phosphatase, found in Schizosaccharomyces pombe (strain 972 / ATCC 24843) (Fission yeast).